A 661-amino-acid polypeptide reads, in one-letter code: UvrABC system protein B (661 aa).

A Helicase ATP-binding domain is found at 25–178; the sequence is EGILKGEKFQ…DEVIRELIRM (154 aa). 38–45 lines the ATP pocket; the sequence is GVTGSGKT. Residues 91–114 carry the Beta-hairpin motif; it reads YYDYYQPEAYIPETDTYIEKDSSI. The Helicase C-terminal domain occupies 429-591; the sequence is QIDHLIGEIR…IVPQTVRKGI (163 aa). Positions 625–660 constitute a UVR domain; it reads EEYIKELEQQMKRFAIELEFEKAAKIRDKIFELKKL.

It belongs to the UvrB family. In terms of assembly, forms a heterotetramer with UvrA during the search for lesions. Interacts with UvrC in an incision complex.

The protein localises to the cytoplasm. In terms of biological role, the UvrABC repair system catalyzes the recognition and processing of DNA lesions. A damage recognition complex composed of 2 UvrA and 2 UvrB subunits scans DNA for abnormalities. Upon binding of the UvrA(2)B(2) complex to a putative damaged site, the DNA wraps around one UvrB monomer. DNA wrap is dependent on ATP binding by UvrB and probably causes local melting of the DNA helix, facilitating insertion of UvrB beta-hairpin between the DNA strands. Then UvrB probes one DNA strand for the presence of a lesion. If a lesion is found the UvrA subunits dissociate and the UvrB-DNA preincision complex is formed. This complex is subsequently bound by UvrC and the second UvrB is released. If no lesion is found, the DNA wraps around the other UvrB subunit that will check the other stand for damage. This chain is UvrABC system protein B, found in Caldicellulosiruptor saccharolyticus (strain ATCC 43494 / DSM 8903 / Tp8T 6331).